Reading from the N-terminus, the 453-residue chain is Cytochrome b-c1 complex subunit 2, mitochondrial (453 aa).

A mitochondrion-targeting transit peptide spans M1–Y14. N6-acetyllysine is present on residues K66, K199, and K250.

It belongs to the peptidase M16 family. UQCRC2/QCR2 subfamily. In terms of assembly, component of the ubiquinol-cytochrome c oxidoreductase (cytochrome b-c1 complex, complex III, CIII), a multisubunit enzyme composed of 11 subunits. The complex is composed of 3 respiratory subunits cytochrome b, cytochrome c1 and Rieske protein UQCRFS1, 2 core protein subunits UQCRC1/QCR1 and UQCRC2/QCR2, and 6 low-molecular weight protein subunits UQCRH/QCR6, UQCRB/QCR7, UQCRQ/QCR8, UQCR10/QCR9, UQCR11/QCR10 and subunit 9, the cleavage product of Rieske protein UQCRFS1. The complex exists as an obligatory dimer and forms supercomplexes (SCs) in the inner mitochondrial membrane with NADH-ubiquinone oxidoreductase (complex I, CI) and cytochrome c oxidase (complex IV, CIV), resulting in different assemblies (supercomplex SCI(1)III(2)IV(1) and megacomplex MCI(2)III(2)IV(2)). Interacts with RAB5IF. Interacts with STMP1.

It is found in the mitochondrion inner membrane. Its function is as follows. Component of the ubiquinol-cytochrome c oxidoreductase, a multisubunit transmembrane complex that is part of the mitochondrial electron transport chain which drives oxidative phosphorylation. The respiratory chain contains 3 multisubunit complexes succinate dehydrogenase (complex II, CII), ubiquinol-cytochrome c oxidoreductase (cytochrome b-c1 complex, complex III, CIII) and cytochrome c oxidase (complex IV, CIV), that cooperate to transfer electrons derived from NADH and succinate to molecular oxygen, creating an electrochemical gradient over the inner membrane that drives transmembrane transport and the ATP synthase. The cytochrome b-c1 complex catalyzes electron transfer from ubiquinol to cytochrome c, linking this redox reaction to translocation of protons across the mitochondrial inner membrane, with protons being carried across the membrane as hydrogens on the quinol. In the process called Q cycle, 2 protons are consumed from the matrix, 4 protons are released into the intermembrane space and 2 electrons are passed to cytochrome c. The 2 core subunits UQCRC1/QCR1 and UQCRC2/QCR2 are homologous to the 2 mitochondrial-processing peptidase (MPP) subunits beta-MPP and alpha-MPP respectively, and they seem to have preserved their MPP processing properties. May be involved in the in situ processing of UQCRFS1 into the mature Rieske protein and its mitochondrial targeting sequence (MTS)/subunit 9 when incorporated into complex III. This Bos taurus (Bovine) protein is Cytochrome b-c1 complex subunit 2, mitochondrial (UQCRC2).